An 876-amino-acid chain; its full sequence is GRB2-associated and regulator of MAPK protein (876 aa).

Residues 9 to 318 (KDVKWSSASF…NLIKGEVWQD (310 aa)) form a CABIT region. Y451 bears the Phosphotyrosine mark. 2 disordered regions span residues 460-569 (SVKR…TLSY) and 708-741 (DRMLGDNSTKQSLSCPALPPRAPKPSEGNALSEP). A compositionally biased stretch (polar residues) spans 461–471 (VKRSGQPLTRS). Over residues 532–549 (PPVPPRSSKPSSPTPSVP) the composition is skewed to pro residues. Polar residues predominate over residues 556–569 (VRQQTRSPSPTLSY). An SAM domain is found at 811-876 (LSVEEVSKSL…QFINGWRPKM (66 aa)).

It belongs to the GAREM family.

Functionally, adapter protein that may provide a link between cell surface epidermal growth factor receptor and the MAPK/ERK signaling pathway. May promote cell proliferation. The chain is GRB2-associated and regulator of MAPK protein (garem1) from Xenopus laevis (African clawed frog).